The sequence spans 258 residues: Dihydroorotate dehydrogenase B (NAD(+)), electron transfer subunit (258 aa).

Residues 1-101 (MKKAYLTVVS…LGPLGNGYDP (101 aa)) enclose the FAD-binding FR-type domain. FAD is bound by residues 52–55 (RPIS), 69–71 (IYR), and 76–77 (GT). Cysteine 220, cysteine 225, cysteine 228, and cysteine 243 together coordinate [2Fe-2S] cluster.

The protein belongs to the PyrK family. In terms of assembly, heterotetramer of 2 PyrK and 2 PyrD type B subunits. Requires [2Fe-2S] cluster as cofactor. FAD is required as a cofactor.

It participates in pyrimidine metabolism; UMP biosynthesis via de novo pathway; orotate from (S)-dihydroorotate (NAD(+) route): step 1/1. Its function is as follows. Responsible for channeling the electrons from the oxidation of dihydroorotate from the FMN redox center in the PyrD type B subunit to the ultimate electron acceptor NAD(+). This Bacillus pumilus (strain SAFR-032) protein is Dihydroorotate dehydrogenase B (NAD(+)), electron transfer subunit.